The chain runs to 89 residues: Dynein light chain 1, cytoplasmic (89 aa).

K36 carries the N6-acetyllysine modification. K43 is covalently cross-linked (Glycyl lysine isopeptide (Lys-Gly) (interchain with G-Cter in SUMO2)). Positions 67-89 (THETKHFIYFYLGQVAILLFKSG) are interaction with ESR1. S88 carries the phosphoserine modification.

This sequence belongs to the dynein light chain family. In terms of assembly, homodimer. Monomer; the monomeric form is incapable of binding to target proteins. The cytoplasmic dynein 1 complex consists of two catalytic heavy chains (HCs) and a number of non-catalytic subunits presented by intermediate chains (ICs), light intermediate chains (LICs) and light chains (LCs); the composition seems to vary in respect to the IC, LIC and LC composition. The heavy chain homodimer serves as a scaffold for the probable homodimeric assembly of the respective non-catalytic subunits. The ICs and LICs bind directly to the HC dimer and the LCs assemble on the IC dimer. Interacts with TXNDC17. Interacts with WWC1 and ESR1. The WWC1-DYNLL1 interaction is mandatory for the recruitment and transactivation functions of ESR1 or DYNLL1 to the target chromatin. Interacts with BCL2L11. Interacts with BCL2; the interaction is greatly enhanced in the nucleus and in mitochondria upon induction of apoptosis. Interacts with PAK1; the interaction requires dimeric DYNLL1. Interacts with MYZAP. Part of an astrin (SPAG5)-kinastrin (SKAP) complex containing KNSTRN, SPAG5, PLK1, DYNLL1 and SGO2. Interacts with ATMIN; this interaction inhibits ATMIN transcriptional activity and hence may play a role in a feedback loop whereby DYNLL1 inhibits transactivation of its own promoter by ATMIN. Interacts with NEK9 (not phosphorylated at 'Ser-944'). Interacts with BICD2. Interacts with BCAS1. Interacts with Basson/BSN. Interacts with HDAC6. Interacts with TPPP. Interacts with AMBRA1 (via TQT motifs); tethering AMBRA1 to the cytoskeleton. Interacts with FAM83D/CHICA (via C-terminus). Interacts with HMMR, SPAG5/Astrin and KNSTRN/Kinastrin. Interacts with TLK2. Interacts with NOS1. Interacts with WWC1, WWC2 and WWC3. Interacts with MRE11; inhibiting MRE11 homodimerization and activity. (Microbial infection) Interacts with bovine immunodeficiency virus Gag protein; this interaction is critical for intracellular microtubule-dependent viral genome transport. Post-translationally, phosphorylation at Ser-88 promotes recruitment to DNA double-strand breaks (DSBs) by TP53BP1 and ability to inhibit MRE11.

Its subcellular location is the cytoplasm. The protein localises to the cytoskeleton. It localises to the microtubule organizing center. The protein resides in the centrosome. It is found in the chromosome. Its subcellular location is the nucleus. The protein localises to the mitochondrion. In terms of biological role, acts as one of several non-catalytic accessory components of the cytoplasmic dynein 1 complex that are thought to be involved in linking dynein to cargos and to adapter proteins that regulate dynein function. Cytoplasmic dynein 1 acts as a motor for the intracellular retrograde motility of vesicles and organelles along microtubules. May play a role in changing or maintaining the spatial distribution of cytoskeletal structures. In addition to its role in cytoskeleton and transport, acts as a protein-protein adapter, which inhibits and/or sequesters target proteins. Involved in the response to DNA damage by acting as a key regulator of DNA end resection: when phosphorylated at Ser-88, recruited to DNA double-strand breaks (DSBs) by TP53BP1 and acts by disrupting MRE11 dimerization, thereby inhibiting DNA end resection. In a subset of DSBs, DYNLL1 remains unphosphorylated and promotes the recruitment of the Shieldin complex. Binds and inhibits the catalytic activity of neuronal nitric oxide synthase/NOS1. Promotes transactivation functions of ESR1 and plays a role in the nuclear localization of ESR1. Regulates apoptotic activities of BCL2L11 by sequestering it to microtubules. Upon apoptotic stimuli the BCL2L11-DYNLL1 complex dissociates from cytoplasmic dynein and translocates to mitochondria and sequesters BCL2 thus neutralizing its antiapoptotic activity. This Bos taurus (Bovine) protein is Dynein light chain 1, cytoplasmic (DYNLL1).